The primary structure comprises 261 residues: Uridine-cytidine kinase 2 (261 aa).

Over residues 1-16 the composition is skewed to polar residues; that stretch reads MAGDSEQTLQNHQQPN. Residues 1 to 24 are disordered; that stretch reads MAGDSEQTLQNHQQPNGGEPFLIG. Alanine 2 is modified (N-acetylalanine). Residue 27-35 participates in ATP binding; that stretch reads GGTASGKSS. Substrate contacts are provided by aspartate 84, tyrosine 112, histidine 117, arginine 166, arginine 176, and glutamine 184. Aspartate 213 lines the ATP pocket. Positions 236–261 are disordered; that stretch reads RQTNGCLNGYTPSRKRQASESSSRPH. Serine 254 is subject to Phosphoserine.

The protein belongs to the uridine kinase family. Homotetramer. According to PubMed:8812458; testis-specific. According to PubMed:11306702, placenta-specific.

The enzyme catalyses uridine + ATP = UMP + ADP + H(+). The catalysed reaction is cytidine + ATP = CMP + ADP + H(+). It participates in pyrimidine metabolism; CTP biosynthesis via salvage pathway; CTP from cytidine: step 1/3. It functions in the pathway pyrimidine metabolism; UMP biosynthesis via salvage pathway; UMP from uridine: step 1/1. Its function is as follows. Phosphorylates uridine and cytidine to uridine monophosphate and cytidine monophosphate. Does not phosphorylate deoxyribonucleosides or purine ribonucleosides. Can use ATP or GTP as a phosphate donor. Can also phosphorylate cytidine and uridine nucleoside analogs such as 6-azauridine, 5-fluorouridine, 4-thiouridine, 5-bromouridine, N(4)-acetylcytidine, N(4)-benzoylcytidine, 5-fluorocytidine, 2-thiocytidine, 5-methylcytidine, and N(4)-anisoylcytidine. The sequence is that of Uridine-cytidine kinase 2 (UCK2) from Homo sapiens (Human).